The following is a 104-amino-acid chain: Pterin-4-alpha-carbinolamine dehydratase (104 aa).

Residue alanine 2 is modified to N-acetylalanine. Residues 61–63 (DHH) and 78–81 (STHE) contribute to the substrate site.

This sequence belongs to the pterin-4-alpha-carbinolamine dehydratase family. As to quaternary structure, homotetramer and homodimer. Heterotetramer with HNF1A; formed by a dimer of dimers. Interacts with HNF1B (via HNF-p1 domain); the interaction increases HNF1B transactivation activity. Mainly expressed in the liver, in pancreatic cells, and in the kidney, especially in the distal convoluted tubule, in the cortical thick ascending limb of Henle's loop and in the connecting tubule.

The protein resides in the cytoplasm. It localises to the nucleus. It catalyses the reaction (4aS,6R)-4a-hydroxy-L-erythro-5,6,7,8-tetrahydrobiopterin = (6R)-L-erythro-6,7-dihydrobiopterin + H2O. Involved in tetrahydrobiopterin biosynthesis. Seems to both prevent the formation of 7-pterins and accelerate the formation of quinonoid-BH2. Coactivator for HNF1A-dependent transcription. Regulates the dimerization of homeodomain protein HNF1A and enhances its transcriptional activity. Also acts as a coactivator for HNF1B-dependent transcription. The protein is Pterin-4-alpha-carbinolamine dehydratase (Pcbd1) of Mus musculus (Mouse).